The sequence spans 523 residues: MLAMSPPKPAVELDRHIDLDQAHAVASGGARIVLAPPARDRCRASEARLGAVIREARHVYGLTTGFGPLANRLISGENVRTLQANLVHHLASGVGPVLDWTTARAMVLARLVSIAQGASGASEGTIARLIDLLNSELAPAVPSRGTVGASGDLTPLAHMVLCLQGRGDFLDRDGTRLDGAEGLRRGRLQPLDLSHRDALALVNGTSAMTGIALVNAHACRHLGNWAVALTALLAECLRGRTEAWAAALSDLRPHPGQKDAAARLRARVDGSARVVRHVIAERRLDAGDIGTEPEAGQDAYSLRCAPQVLGAGFDTLAWHDRVLTIELNAVTDNPVFPPDGSVPALHGGNFMGQHVALTSDALATAVTVLAGLAERQIARLTDERLNRGLPPFLHRGPAGLNSGFMGAQVTATALLAEMRATGPASIHSISTNAANQDVVSLGTIAARLCREKIDRWAEILAILALCLAQAAELRCGSGLDGVSPAGKKLVQALREQFPPLETDRPLGQEIAALATHLLQQSPV.

The Proton donor/acceptor role is filled by tyrosine 60. Histidine 89 lines the substrate pocket. Positions 149–151 form a cross-link, 5-imidazolinone (Ala-Gly); sequence ASG. Serine 150 carries the post-translational modification 2,3-didehydroalanine (Ser). Substrate is bound by residues arginine 303 and 432–436; that span reads NAANQ.

It belongs to the PAL/histidase family. As to quaternary structure, homotetramer. Contains an active site 4-methylidene-imidazol-5-one (MIO), which is formed autocatalytically by cyclization and dehydration of residues Ala-Ser-Gly.

The catalysed reaction is L-tyrosine = (E)-4-coumarate + NH4(+). Functionally, catalyzes the non-oxidative deamination of L-tyrosine. Has very low phenylalanine ammonia-lyase activity (in vitro). This Cereibacter sphaeroides (strain ATCC 17023 / DSM 158 / JCM 6121 / CCUG 31486 / LMG 2827 / NBRC 12203 / NCIMB 8253 / ATH 2.4.1.) (Rhodobacter sphaeroides) protein is Tyrosine ammonia-lyase (hutH).